Here is an 810-residue protein sequence, read N- to C-terminus: Probable inorganic carbon transporter subunit DabA (810 aa).

Residues Cys347, Asp349, His509, and Cys524 each coordinate Zn(2+).

The protein belongs to the inorganic carbon transporter (TC 9.A.2) DabA family. Forms a complex with DabB. Requires Zn(2+) as cofactor.

Its subcellular location is the cell inner membrane. In terms of biological role, part of an energy-coupled inorganic carbon pump. The chain is Probable inorganic carbon transporter subunit DabA from Marinomonas sp. (strain MWYL1).